Reading from the N-terminus, the 616-residue chain is Dihydroxy-acid dehydratase (616 aa).

Asp-81 contributes to the Mg(2+) binding site. Residue Cys-122 participates in [2Fe-2S] cluster binding. Residues Asp-123 and Lys-124 each coordinate Mg(2+). An N6-carboxylysine modification is found at Lys-124. Residue Cys-195 participates in [2Fe-2S] cluster binding. A Mg(2+)-binding site is contributed by Glu-491. The Proton acceptor role is filled by Ser-517.

This sequence belongs to the IlvD/Edd family. Homodimer. [2Fe-2S] cluster serves as cofactor. It depends on Mg(2+) as a cofactor.

It catalyses the reaction (2R)-2,3-dihydroxy-3-methylbutanoate = 3-methyl-2-oxobutanoate + H2O. The enzyme catalyses (2R,3R)-2,3-dihydroxy-3-methylpentanoate = (S)-3-methyl-2-oxopentanoate + H2O. It participates in amino-acid biosynthesis; L-isoleucine biosynthesis; L-isoleucine from 2-oxobutanoate: step 3/4. It functions in the pathway amino-acid biosynthesis; L-valine biosynthesis; L-valine from pyruvate: step 3/4. Functionally, functions in the biosynthesis of branched-chain amino acids. Catalyzes the dehydration of (2R,3R)-2,3-dihydroxy-3-methylpentanoate (2,3-dihydroxy-3-methylvalerate) into 2-oxo-3-methylpentanoate (2-oxo-3-methylvalerate) and of (2R)-2,3-dihydroxy-3-methylbutanoate (2,3-dihydroxyisovalerate) into 2-oxo-3-methylbutanoate (2-oxoisovalerate), the penultimate precursor to L-isoleucine and L-valine, respectively. The protein is Dihydroxy-acid dehydratase of Sodalis glossinidius (strain morsitans).